A 456-amino-acid polypeptide reads, in one-letter code: Phosphomethylpyrimidine synthase (456 aa).

Substrate contacts are provided by residues asparagine 80, methionine 109, tyrosine 139, histidine 175, 195 to 197 (SRG), 236 to 239 (DSLR), and glutamate 275. Position 279 (histidine 279) interacts with Zn(2+). Tyrosine 302 is a substrate binding site. Histidine 343 contacts Zn(2+). [4Fe-4S] cluster is bound by residues cysteine 423, cysteine 426, and cysteine 431.

Belongs to the ThiC family. Requires [4Fe-4S] cluster as cofactor.

It catalyses the reaction 5-amino-1-(5-phospho-beta-D-ribosyl)imidazole + S-adenosyl-L-methionine = 4-amino-2-methyl-5-(phosphooxymethyl)pyrimidine + CO + 5'-deoxyadenosine + formate + L-methionine + 3 H(+). It functions in the pathway cofactor biosynthesis; thiamine diphosphate biosynthesis. Functionally, catalyzes the synthesis of the hydroxymethylpyrimidine phosphate (HMP-P) moiety of thiamine from aminoimidazole ribotide (AIR) in a radical S-adenosyl-L-methionine (SAM)-dependent reaction. The chain is Phosphomethylpyrimidine synthase from Prochlorococcus marinus (strain MIT 9515).